Reading from the N-terminus, the 104-residue chain is Co-chaperonin GroES 2 (104 aa).

This sequence belongs to the GroES chaperonin family. Heptamer of 7 subunits arranged in a ring. Interacts with the chaperonin GroEL.

It is found in the cytoplasm. Together with the chaperonin GroEL, plays an essential role in assisting protein folding. The GroEL-GroES system forms a nano-cage that allows encapsulation of the non-native substrate proteins and provides a physical environment optimized to promote and accelerate protein folding. GroES binds to the apical surface of the GroEL ring, thereby capping the opening of the GroEL channel. This is Co-chaperonin GroES 2 from Rhodopseudomonas palustris (strain ATCC BAA-98 / CGA009).